The sequence spans 444 residues: Acyl-CoA 6-desaturase (444 aa).

The Cytoplasmic segment spans residues 1 to 122 (MGKGGNQDEG…FRALRKTAED (122 aa)). Residues 18-95 (MPTFRWEEIQ…MKPLLIGELA (78 aa)) form the Cytochrome b5 heme-binding domain. A helical transmembrane segment spans residues 123–143 (MNLFKSNQLFFLLHLAHIIAM). Over 144–147 (ESIA) the chain is Lumenal. The helical transmembrane segment at 148 to 168 (WFTLFYFGNGWIPTIITAFVL) threads the bilayer. Over 169–264 (ATSQAQAGWL…KYLPYNHQHE (96 aa)) the chain is Cytoplasmic. Positions 180 to 184 (HDYGH) match the Histidine box-1 motif. Positions 217–221 (HFQHH) match the Histidine box-2 motif. Residues 265–285 (YFFLIGPPLLIPLYFQYQIIM) form a helical membrane-spanning segment. Topologically, residues 286 to 305 (TMIVRKYWADLAWAISYYTR) are lumenal. Residues 306–326 (FFITYIPFYGVLGSILFLNFI) traverse the membrane as a helical segment. Topologically, residues 327 to 444 (RFLESHWFVW…QLWLDAYLHK (118 aa)) are cytoplasmic. Positions 382 to 386 (QIEHH) match the Histidine box-3 motif.

Belongs to the fatty acid desaturase type 1 family.

It localises to the endoplasmic reticulum membrane. The enzyme catalyses (9Z,12Z)-octadecadienoyl-CoA + 2 Fe(II)-[cytochrome b5] + O2 + 2 H(+) = (6Z,9Z,12Z)-octadecatrienoyl-CoA + 2 Fe(III)-[cytochrome b5] + 2 H2O. The catalysed reaction is (9Z,12Z,15Z)-octadecatrienoyl-CoA + 2 Fe(II)-[cytochrome b5] + O2 + 2 H(+) = (6Z,9Z,12Z,15Z)-octadecatetraenoyl-CoA + 2 Fe(III)-[cytochrome b5] + 2 H2O. It carries out the reaction (9Z,12Z,15Z,18Z,21Z)-tetracosapentaenoyl-CoA + 2 Fe(II)-[cytochrome b5] + O2 + 2 H(+) = (6Z,9Z,12Z,15Z,18Z,21Z)-tetracosahexaenoyl-CoA + 2 Fe(III)-[cytochrome b5] + 2 H2O. It catalyses the reaction (11E)-octadecenoyl-CoA + 2 Fe(II)-[cytochrome b5] + O2 + 2 H(+) = (6Z,11E)-octadecadienoyl-CoA + 2 Fe(III)-[cytochrome b5] + 2 H2O. The enzyme catalyses (11Z,14Z)-eicosadienoyl-CoA + 2 Fe(II)-[cytochrome b5] + O2 + 2 H(+) = (8Z,11Z,14Z)-eicosatrienoyl-CoA + 2 Fe(III)-[cytochrome b5] + 2 H2O. The catalysed reaction is (11Z,14Z,17Z)-eicosatrienoyl-CoA + 2 Fe(II)-[cytochrome b5] + O2 + 2 H(+) = (8Z,11Z,14Z,17Z)-eicosatetraenoyl-CoA + 2 Fe(III)-[cytochrome b5] + 2 H2O. The protein operates within lipid metabolism; polyunsaturated fatty acid biosynthesis. In terms of biological role, involved in the biosynthesis of highly unsaturated fatty acids (HUFA) from the essential polyunsaturated fatty acids (PUFA) linoleic acid (LA) (18:2n-6) and alpha-linolenic acid (ALA) (18:3n-3) precursors, acting as a fatty acyl-coenzyme A (CoA) desaturase that introduces a cis double bond at carbon 6 of the fatty acyl chain. Catalyzes the first and rate limiting step in this pathway which is the desaturation of LA (18:2n-6) and ALA (18:3n-3) into gamma-linoleate (GLA) (18:3n-6) and stearidonate (18:4n-3), respectively. Subsequently, in the biosynthetic pathway of HUFA n-3 series, it desaturates tetracosapentaenoate (24:5n-3) to tetracosahexaenoate (24:6n-3), which is then converted to docosahexaenoate (DHA)(22:6n-3), an important lipid for nervous system function. It can also desaturate (11E)-octadecenoate (trans-vaccenoate, a metabolite in the biohydrogenation pathway of LA and the predominant trans fatty acid in cow milk) at carbon 6 generating (6Z,11E)-octadecadienoate. In addition to Delta-6 activity, this enzyme exhibits Delta-8 activity with slight biases toward n-3 fatty acyl-CoA substrates. The polypeptide is Acyl-CoA 6-desaturase (FADS2) (Bos taurus (Bovine)).